The following is a 569-amino-acid chain: Dolichol kinase EVAN (569 aa).

At 1–22 the chain is on the cytoplasmic side; that stretch reads MKTTATSFVTGERVVVFVVVSR. Residues 23-43 form a helical membrane-spanning segment; that stretch reads ILLSLPLSLISHGFSLFLLSL. Residues 44–67 are Lumenal-facing; the sequence is SAFLVEIRVETSPFLLSHFSSRRG. Residues 68–88 traverse the membrane as a helical segment; the sequence is ASSGILLGAVTLPSVMISKLV. Residues 89 to 108 are Cytoplasmic-facing; that stretch reads QLSRAISIHEAEQDELAHVT. A helical transmembrane segment spans residues 109 to 129; sequence MQYWAASASCCAILIYLSVIM. At 130–147 the chain is on the lumenal side; it reads SQVRKDESLSSSSIWLTR. The chain crosses the membrane as a helical span at residues 148-168; it reads VSLTGTVLYGVACFVSLSMIS. Residues 169–178 are Cytoplasmic-facing; that stretch reads HTGLNTSLKM. A helical transmembrane segment spans residues 179 to 199; the sequence is LWMLFHGLAAVKLIRHLLCTF. Residues 200–207 are Lumenal-facing; that stretch reads PSCASIGE. The chain crosses the membrane as a helical span at residues 208–228; it reads ALLVTSGLVLYFGDFLACTIA. The Cytoplasmic portion of the chain corresponds to 229–252; sequence KIFEKLIPVDLVSISYGIKRTETG. A helical membrane pass occupies residues 253 to 273; it reads IIVQGLLLGLLLFPMVFRFVL. At 274 to 296 the chain is on the lumenal side; it reads HIYESSLRKRDARQRNCSDAAKS. Residue Asn-289 is glycosylated (N-linked (GlcNAc...) asparagine). Residues 297–317 form a helical membrane-spanning segment; it reads VLFFVSLLFFMVVAVPSWMQF. At 318–340 the chain is on the cytoplasmic side; it reads VHDFNQHPFLWVLTFVFSEPLKR. Residues 341 to 361 form a helical membrane-spanning segment; that stretch reads LSLCIYWILLIVVSVSRFYNI. Over 362–369 the chain is Lumenal; it reads SRSSKVER. Residues 370-390 form a helical membrane-spanning segment; that stretch reads ILLRKYYHLMAVLMFLPALVL. Over 391 to 393 the chain is Cytoplasmic; the sequence is QPK. A helical transmembrane segment spans residues 394 to 414; the sequence is FLDLAFGAALAVFVALEIIRI. Residues 415 to 440 lie on the Lumenal side of the membrane; it reads WRIQPLGEPLHQFMNAFTDHRDSEHL. The helical transmembrane segment at 441-461 threads the bilayer; sequence IVSHFSLLLGCALPIWMSSGF. The Cytoplasmic segment spans residues 462–464; it reads NDR. A helical membrane pass occupies residues 465–485; that stretch reads ALSPFAGILSLGIGDTMASMV. At 486 to 508 the chain is on the lumenal side; it reads GHKYGVLRWSKTGKKTVEGTAAG. Residues 487–503 form a CTP-binding region; the sequence is HKYGVLRWSKTGKKTVE. A helical membrane pass occupies residues 509–529; it reads ITSMMAVCFVLVPILASMGYI. Topologically, residues 530-548 are cytoplasmic; sequence LSQGWWSLLVAVTATGMLE. The chain crosses the membrane as a helical span at residues 549–569; that stretch reads AYTAQLDNAFIPLVFYSLLCL.

Belongs to the polyprenol kinase family.

Its subcellular location is the endoplasmic reticulum membrane. The catalysed reaction is a di-trans,poly-cis-dolichol + CTP = a di-trans,poly-cis-dolichyl phosphate + CDP + H(+). Functionally, essential for pollen development. Involved in protein N-glycosylation in the endoplasmic reticulum (ER), especially in the female gametophyte. Mediates pollen tube (PT) reception in synergids through protein glycosylation. This Arabidopsis thaliana (Mouse-ear cress) protein is Dolichol kinase EVAN.